Reading from the N-terminus, the 102-residue chain is Large ribosomal subunit protein bL21 (102 aa).

Belongs to the bacterial ribosomal protein bL21 family. Part of the 50S ribosomal subunit. Contacts protein L20.

Its function is as follows. This protein binds to 23S rRNA in the presence of protein L20. In Myxococcus xanthus (strain DK1622), this protein is Large ribosomal subunit protein bL21.